A 601-amino-acid chain; its full sequence is MAYDDSVKKEDCFDGDHTFEDIGLAAGRSQREKKRSYKDFLREEEEIAAQVRNSSKKKLKDSELYFLGTDTHKKKRKHSSDDYYYGDISSLESSQKKKKKSSPQSTDTAMDLLKAITSPLAAGSKPSKKTGEKSSGSSSHSESKKEHHRKKVSGSSGELPLEDGGSHKSKKMKPLYVNTETLTLREPDGLKMKLILSPKEKGSSSVDEESFQYPSQQATVKKSSKKSARDEQGALLLGHELQSFLKTARKKHKSSSDAHSSPGPEGCGSDASQFAESHSANLDLSGLEPILVESDSSSGGELEAGELVIDDSYREIKKKKKSKKSKKKKDKEKHKEKRHSKSKRSLGLSAVPVGEVTVTSGPPPSIPYAGAAAPPLPLPGLHTDGHSEKKKKKEEKDKERERGEKPKKKNMSAYQVFCKEYRVTIVADHPGIDFGELSKKLAEVWKQLPEKDKLIWKQKAQYLQHKQNKAEATTVKRKASSSEGSMKVKASSVGVLSPQKKSPPTTMLLPASPAKAPETEPIDVAAHLQLLGESLSLIGHRLQETEGMVAVSGSLSVLLDSIICALGPLACLTTQLPELNGCPKQVLSNTLDNIAYIMPGL.

Lys-8 participates in a covalent cross-link: Glycyl lysine isopeptide (Lys-Gly) (interchain with G-Cter in SUMO2). Disordered regions lie at residues 51 to 410 and 473 to 514; these read VRNS…KKKN and TTVK…ASPA. A compositionally biased stretch (low complexity) spans 82 to 93; it reads DYYYGDISSLES. Ser-102 is subject to Phosphoserine. Residue Lys-191 forms a Glycyl lysine isopeptide (Lys-Gly) (interchain with G-Cter in SUMO2) linkage. Position 197 is a phosphoserine (Ser-197). Polar residues-rich tracts occupy residues 212–221 and 270–282; these read QYPSQQATVK and DASQ…SANL. A compositionally biased stretch (basic residues) spans 316-344; it reads IKKKKKSKKSKKKKDKEKHKEKRHSKSKR. The span at 394 to 404 shows a compositional bias: basic and acidic residues; sequence EEKDKERERGE. Residues 407–475 constitute a DNA-binding region (HMG box); sequence KKKNMSAYQV…KQNKAEATTV (69 aa). Residues Ser-497, Ser-502, and Ser-512 each carry the phosphoserine modification.

Its subcellular location is the nucleus. In terms of biological role, negatively regulates Wnt/beta-catenin signaling during development. The polypeptide is HMG domain-containing protein 4 (HMGXB4) (Homo sapiens (Human)).